Reading from the N-terminus, the 243-residue chain is Vesicle-associated membrane protein-associated protein B (243 aa).

Ala2 is modified (N-acetylalanine). The Cytoplasmic segment spans residues 2–218 (AKVEQVLSLE…AALAATGKEE (217 aa)). In terms of domain architecture, MSP spans 7 to 124 (VLSLEPQHEL…MDSKLRCVFE (118 aa)). Ser146 carries the post-translational modification Phosphoserine. Residue Lys147 forms a Glycyl lysine isopeptide (Lys-Gly) (interchain with G-Cter in SUMO1) linkage. A phosphoserine mark is found at Ser156 and Ser159. A coiled-coil region spans residues 161–196 (LDDTEVKKVMEECRRLQGEVQRLREESRQLKEEDGL). Residue Ser206 is modified to Phosphoserine. Residues 219–239 (GLSARLLALVVLFFIVGVIIG) form a helical; Anchor for type IV membrane protein membrane-spanning segment.

Belongs to the VAMP-associated protein (VAP) (TC 9.B.17) family. As to quaternary structure, homodimer, and heterodimer with VAPA. Interacts with VAMP1 and VAMP2. Interacts (via MSP domain) with ZFYVE27. Interacts with RMDN3. Interacts with KIF5A in a ZFYVE27-dependent manner. Interacts (via MSP domain) with STARD3 (via phospho-FFAT motif). Interacts with STARD3NL (via FFAT motif). Interacts with CERT1. Interacts with PLEKHA3 and SACM1L to form a ternary complex. Interacts with VPS13A (via FFAT motif). Interacts with RB1CC1 (via phosphorylated FFAT motif), MIGA2 (via phosphorylated FFAT motif), RMDN3 (via phosphorylated FFAT motif), OSBPL1A (via FFAT motif), KCNB1 (via phosphorylated FFAT motif) and KCNB2 (via phosphorylated FFAT motif). Interacts (via MSP domain) with WDR44 (via FFAT motif); the interactions connect the endoplasmic reticulum (ER) with the endosomal tubule.

The protein resides in the endoplasmic reticulum membrane. Functionally, endoplasmic reticulum (ER)-anchored protein that mediates the formation of contact sites between the ER and endosomes via interaction with FFAT motif-containing proteins such as STARD3 or WDR44. Interacts with STARD3 in a FFAT motif phosphorylation dependent manner. Via interaction with WDR44 participates in neosynthesized protein export. Participates in the endoplasmic reticulum unfolded protein response (UPR) by inducing ERN1/IRE1 activity. Involved in cellular calcium homeostasis regulation. This chain is Vesicle-associated membrane protein-associated protein B, found in Mus musculus (Mouse).